Reading from the N-terminus, the 142-residue chain is Large ribosomal subunit protein uL13 (142 aa).

It belongs to the universal ribosomal protein uL13 family. In terms of assembly, part of the 50S ribosomal subunit.

This protein is one of the early assembly proteins of the 50S ribosomal subunit, although it is not seen to bind rRNA by itself. It is important during the early stages of 50S assembly. This is Large ribosomal subunit protein uL13 from Stutzerimonas stutzeri (strain A1501) (Pseudomonas stutzeri).